Here is a 444-residue protein sequence, read N- to C-terminus: Exodeoxyribonuclease 7 large subunit (444 aa).

Belongs to the XseA family. Heterooligomer composed of large and small subunits.

The protein localises to the cytoplasm. It carries out the reaction Exonucleolytic cleavage in either 5'- to 3'- or 3'- to 5'-direction to yield nucleoside 5'-phosphates.. In terms of biological role, bidirectionally degrades single-stranded DNA into large acid-insoluble oligonucleotides, which are then degraded further into small acid-soluble oligonucleotides. The chain is Exodeoxyribonuclease 7 large subunit from Pseudoalteromonas translucida (strain TAC 125).